The following is a 486-amino-acid chain: Bifunctional protein HldE (486 aa).

Residues 1–331 (MAEHDDGDLI…VDAVKPASGA (331 aa)) form a ribokinase region. 208 to 211 (NRRE) contacts ATP. The active site involves Asp-277. Positions 357 to 486 (FTNGCFDLLH…TTATVTRLRS (130 aa)) are cytidylyltransferase.

The protein in the N-terminal section; belongs to the carbohydrate kinase PfkB family. It in the C-terminal section; belongs to the cytidylyltransferase family. Homodimer.

The catalysed reaction is D-glycero-beta-D-manno-heptose 7-phosphate + ATP = D-glycero-beta-D-manno-heptose 1,7-bisphosphate + ADP + H(+). It carries out the reaction D-glycero-beta-D-manno-heptose 1-phosphate + ATP + H(+) = ADP-D-glycero-beta-D-manno-heptose + diphosphate. The protein operates within nucleotide-sugar biosynthesis; ADP-L-glycero-beta-D-manno-heptose biosynthesis; ADP-L-glycero-beta-D-manno-heptose from D-glycero-beta-D-manno-heptose 7-phosphate: step 1/4. It participates in nucleotide-sugar biosynthesis; ADP-L-glycero-beta-D-manno-heptose biosynthesis; ADP-L-glycero-beta-D-manno-heptose from D-glycero-beta-D-manno-heptose 7-phosphate: step 3/4. In terms of biological role, catalyzes the phosphorylation of D-glycero-D-manno-heptose 7-phosphate at the C-1 position to selectively form D-glycero-beta-D-manno-heptose-1,7-bisphosphate. Its function is as follows. Catalyzes the ADP transfer from ATP to D-glycero-beta-D-manno-heptose 1-phosphate, yielding ADP-D-glycero-beta-D-manno-heptose. The sequence is that of Bifunctional protein HldE from Acidiphilium cryptum (strain JF-5).